Here is a 320-residue protein sequence, read N- to C-terminus: MARKKIALIGAGQIGGTLAHLAGLKELGDVVLFDIADGVPQGKGLDIAESAPVDGFDAKYAGASDYAAIAGADVVIVTAGVPRKPGMSRDDLIGINLQVMEKVGAGIRTHAPNAFVICITNPLDAMVWALQKFSGLAPNKIVGMAGVLDSARFRHFLAEEFQVSVEDVTAFVLGGHGDDMVPLVRYSTVAGVPLPDLVKMGWTTQEKLDAMVERTRKGGGEIVNLLKTGSAFYAPAASAIAMAESYLKDKRRVLPCAAYLTGQYGIDGLFIGVPIVIGENGVERVVEVEFSAEEKAMFDKSVASVKGLVEACKGINAALA.

NAD(+) is bound by residues 10-15 (GAGQIG) and D34. 2 residues coordinate substrate: R83 and R89. Residues N96 and 119-121 (ITN) contribute to the NAD(+) site. 2 residues coordinate substrate: N121 and R152. The Proton acceptor role is filled by H176.

Belongs to the LDH/MDH superfamily. MDH type 3 family.

It catalyses the reaction (S)-malate + NAD(+) = oxaloacetate + NADH + H(+). Functionally, catalyzes the reversible oxidation of malate to oxaloacetate. This chain is Malate dehydrogenase, found in Methylobacterium sp. (strain 4-46).